Consider the following 346-residue polypeptide: GTPase Obg (346 aa).

One can recognise an Obg domain in the interval 1–159 (MKFLDSAKIY…RTVLLRLKLI (159 aa)). Residues 160-327 (ADAGLVGLPN…ALRAVLAEID (168 aa)) form the OBG-type G domain. Residues 166–173 (GLPNAGKS), 191–195 (FTTLN), 212–215 (DIPG), 279–282 (SKVD), and 308–310 (SAA) contribute to the GTP site. Mg(2+) contacts are provided by Ser-173 and Thr-193.

Belongs to the TRAFAC class OBG-HflX-like GTPase superfamily. OBG GTPase family. As to quaternary structure, monomer. Mg(2+) is required as a cofactor.

It is found in the cytoplasm. Its function is as follows. An essential GTPase which binds GTP, GDP and possibly (p)ppGpp with moderate affinity, with high nucleotide exchange rates and a fairly low GTP hydrolysis rate. Plays a role in control of the cell cycle, stress response, ribosome biogenesis and in those bacteria that undergo differentiation, in morphogenesis control. The chain is GTPase Obg from Methylocella silvestris (strain DSM 15510 / CIP 108128 / LMG 27833 / NCIMB 13906 / BL2).